The chain runs to 231 residues: Elongation factor 1-delta (231 aa).

Positions 75–136 are disordered; the sequence is SGVTVEGNAP…AAAAAAKPAK (62 aa). Residues 101–117 show a composition bias toward acidic residues; the sequence is ADDDDDDDVDLFGEETE. The span at 118–127 shows a compositional bias: basic and acidic residues; it reads EEKKAAEERA.

The protein belongs to the EF-1-beta/EF-1-delta family. EF-1 is composed of 4 subunits: alpha, beta (1B-alpha=beta'), delta (1B-beta), and gamma (1B-gamma).

Functionally, EF-1-beta and EF-1-beta' stimulate the exchange of GDP bound to EF-1-alpha to GTP. This Beta vulgaris (Sugar beet) protein is Elongation factor 1-delta.